The sequence spans 300 residues: NAD kinase (300 aa).

Asp75 functions as the Proton acceptor in the catalytic mechanism. NAD(+) contacts are provided by residues 75 to 76, 149 to 150, Arg177, Asp179, 190 to 195, Ala214, and Gln248; these read DG, ND, and TAYALS.

The protein belongs to the NAD kinase family. The cofactor is a divalent metal cation.

The protein localises to the cytoplasm. It catalyses the reaction NAD(+) + ATP = ADP + NADP(+) + H(+). In terms of biological role, involved in the regulation of the intracellular balance of NAD and NADP, and is a key enzyme in the biosynthesis of NADP. Catalyzes specifically the phosphorylation on 2'-hydroxyl of the adenosine moiety of NAD to yield NADP. This is NAD kinase from Burkholderia mallei (strain SAVP1).